A 176-amino-acid polypeptide reads, in one-letter code: Putative metal-dependent hydrolase BLi00869/BLi00870/BL03027 (176 aa).

Zn(2+) is bound by residues His65, His158, and His162.

It belongs to the metal hydrolase YfiT family. In terms of assembly, homodimer. The cofactor is Zn(2+).

It is found in the cytoplasm. Possible metal-dependent hydrolase. This is Putative metal-dependent hydrolase BLi00869/BLi00870/BL03027 from Bacillus licheniformis (strain ATCC 14580 / DSM 13 / JCM 2505 / CCUG 7422 / NBRC 12200 / NCIMB 9375 / NCTC 10341 / NRRL NRS-1264 / Gibson 46).